Reading from the N-terminus, the 213-residue chain is Putative 3-methyladenine DNA glycosylase (213 aa).

The protein belongs to the DNA glycosylase MPG family.

This chain is Putative 3-methyladenine DNA glycosylase, found in Paraburkholderia phytofirmans (strain DSM 17436 / LMG 22146 / PsJN) (Burkholderia phytofirmans).